Here is a 1174-residue protein sequence, read N- to C-terminus: Male determiner protein Mdmd(III) (1174 aa).

The span at 1 to 15 (MNATDAESRKPENKP) shows a compositional bias: basic and acidic residues. Disordered stretches follow at residues 1–51 (MNAT…SGQR), 80–109 (KDGS…HPVE), and 136–259 (KQLS…LRRS). The segment covering 16–35 (SSESSSSGSTSGSSDGEVSS) has biased composition (low complexity). Polar residues predominate over residues 36 to 47 (KTYFKNNKSKVL). Positions 80 to 92 (KDGSNEMLPKEDS) are enriched in basic and acidic residues. Residues 93–102 (INTNHNYTTD) show a composition bias toward polar residues. Over residues 138–153 (LSAYRSRSRSTRLSYS) the composition is skewed to low complexity. The segment covering 167 to 180 (SRYKKSVLRNRRTS) has biased composition (basic residues). The segment covering 183-200 (HGRDSSTTKRSVSRDKDN) has biased composition (basic and acidic residues). Basic residues predominate over residues 201-223 (RLRRRIGSSRSHTRSHSRFRRSE). Basic and acidic residues predominate over residues 235–259 (RSQERRHERRRSMSSDYERIALRRS). An MIF4G domain is found at 348-531 (KKYIHGYINK…KVLFQVRRDG (184 aa)). One can recognise an MI domain in the interval 641–757 (ALRRTIYLTL…SWDVLDCIKL (117 aa)). The span at 840–857 (SAPSSSSSSSLSSELSAP) shows a compositional bias: low complexity. 2 disordered regions span residues 840-1045 (SAPS…SRTK) and 1096-1133 (KDNY…NHSR). Residues 869 to 909 (KKKHKGKNKKMTKKKNPSKKKEKTKKFVGKNKIAAKNKTIK) are compositionally biased toward basic residues. A compositionally biased stretch (basic and acidic residues) spans 910-924 (RRTDKDNSSSKDNFL). Residues 926 to 957 (SESSSNESISLDSLSSELFAPSSYSSSESSND) show a composition bias toward low complexity. The span at 963-1001 (KHKGKNKKMTKKKNPSNKKEKTKKKLSKNKKAPNKNTKK) shows a compositional bias: basic residues. Low complexity predominate over residues 1010 to 1020 (SSESSISESKS). Positions 1034-1045 (RKKRVTSKSRTK) are enriched in basic residues. Residues 1103–1118 (QNHEISQRHDSEIKRR) show a composition bias toward basic and acidic residues. The span at 1119 to 1130 (REERKKRHHEKN) shows a compositional bias: basic residues.

This sequence belongs to the CWC22 family. As to quaternary structure, component of the spliceosome C complex.

It is found in the nucleus speckle. Functionally, male determiner protein (M-factor) that controls male somatic sexual differentiation. Acts as a dominant factor that regulates the mRNA splicing of transformer (tra) and doublesex (dsx) transcripts and promotes expression of male splice forms of tra and dsx. Probably acts as a component of the spliceosome C complex required for mRNA splicing factor and exon-junction complex (EJC) assembly. Hinders eIF4AIII from non-specifically binding RNA and escorts it to the splicing machinery to promote EJC assembly on mature mRNAs. The sequence is that of Male determiner protein Mdmd(III) from Musca domestica (House fly).